Reading from the N-terminus, the 473-residue chain is UDP-N-acetylmuramate--L-alanine ligase (473 aa).

114-120 (GTHGKTT) contributes to the ATP binding site.

It belongs to the MurCDEF family.

The protein localises to the cytoplasm. The enzyme catalyses UDP-N-acetyl-alpha-D-muramate + L-alanine + ATP = UDP-N-acetyl-alpha-D-muramoyl-L-alanine + ADP + phosphate + H(+). Its pathway is cell wall biogenesis; peptidoglycan biosynthesis. In terms of biological role, cell wall formation. The polypeptide is UDP-N-acetylmuramate--L-alanine ligase (Chlorobium luteolum (strain DSM 273 / BCRC 81028 / 2530) (Pelodictyon luteolum)).